The following is a 309-amino-acid chain: Ribonuclease Z (309 aa).

Zn(2+)-binding residues include His63, His65, Asp67, His68, His145, Asp216, and His274. Asp67 acts as the Proton acceptor in catalysis.

This sequence belongs to the RNase Z family. As to quaternary structure, homodimer. Requires Zn(2+) as cofactor.

The enzyme catalyses Endonucleolytic cleavage of RNA, removing extra 3' nucleotides from tRNA precursor, generating 3' termini of tRNAs. A 3'-hydroxy group is left at the tRNA terminus and a 5'-phosphoryl group is left at the trailer molecule.. In terms of biological role, zinc phosphodiesterase, which displays some tRNA 3'-processing endonuclease activity. Probably involved in tRNA maturation, by removing a 3'-trailer from precursor tRNA. The polypeptide is Ribonuclease Z (Streptococcus agalactiae serotype Ia (strain ATCC 27591 / A909 / CDC SS700)).